A 167-amino-acid polypeptide reads, in one-letter code: NAD(P)H-quinone oxidoreductase subunit I, chloroplastic (167 aa).

4Fe-4S ferredoxin-type domains follow at residues 55 to 84 (GRIH…VDWK) and 95 to 124 (LNYS…MTEE). Residues Cys64, Cys67, Cys70, Cys74, Cys104, Cys107, Cys110, and Cys114 each contribute to the [4Fe-4S] cluster site.

It belongs to the complex I 23 kDa subunit family. NDH is composed of at least 16 different subunits, 5 of which are encoded in the nucleus. Requires [4Fe-4S] cluster as cofactor.

It is found in the plastid. The protein resides in the chloroplast thylakoid membrane. The enzyme catalyses a plastoquinone + NADH + (n+1) H(+)(in) = a plastoquinol + NAD(+) + n H(+)(out). The catalysed reaction is a plastoquinone + NADPH + (n+1) H(+)(in) = a plastoquinol + NADP(+) + n H(+)(out). In terms of biological role, NDH shuttles electrons from NAD(P)H:plastoquinone, via FMN and iron-sulfur (Fe-S) centers, to quinones in the photosynthetic chain and possibly in a chloroplast respiratory chain. The immediate electron acceptor for the enzyme in this species is believed to be plastoquinone. Couples the redox reaction to proton translocation, and thus conserves the redox energy in a proton gradient. The polypeptide is NAD(P)H-quinone oxidoreductase subunit I, chloroplastic (Aethionema cordifolium (Lebanon stonecress)).